A 391-amino-acid polypeptide reads, in one-letter code: DNA-directed RNA polymerase subunit Rpo1C (391 aa).

The protein belongs to the RNA polymerase beta' chain family. In terms of assembly, part of the RNA polymerase complex.

It is found in the cytoplasm. The catalysed reaction is RNA(n) + a ribonucleoside 5'-triphosphate = RNA(n+1) + diphosphate. Functionally, DNA-dependent RNA polymerase (RNAP) catalyzes the transcription of DNA into RNA using the four ribonucleoside triphosphates as substrates. Forms part of the jaw domain. This is DNA-directed RNA polymerase subunit Rpo1C from Thermococcus gammatolerans (strain DSM 15229 / JCM 11827 / EJ3).